Consider the following 285-residue polypeptide: NADH-dependent oxidoreductase ucdB (285 aa).

Residue Thr-87 coordinates NAD(+). Lys-156 is a catalytic residue.

Belongs to the HIBADH-related family. NP60 subfamily.

It functions in the pathway secondary metabolite biosynthesis. Functionally, nonribosomal peptide synthetase that mediates the biosynthesis of usterphenyllins and uscandidusins, p-terphenyl derivatives. Within the pathway, ucdB alone catalyzes both reduction and dehydration of atromentin to form a terphenyl triol intermediate. The pathway begin with the biosynthesis of 4-hydroxyphenylpyruvate (HPPA) from L-tyrosine, possibly by the aminotransferase ucdG. The nonribosomal peptide synthetase ucdA then condenses two HPPA units to produce atromentin. The key step in this pathway is the reduction and dehydration of atromentin to form a terphenyl triol intermediate, performed by the NAD-dependent dehydrogenase ucdB. Further O-methylation by the methyltransferase ucdC forms terphenyllin carrying two methoxy moieties at C-9 and C-12, and subsequent dihydroxylation at C-3 of ring A and C-15 of ring C by the flavin-dependent oxygenase ucdD leads to 3,15-dihydroxyterphenyllin. Prenylation by ucdE at position C-5 of ring A forms usterphenyllin B, and is followed by a second prenylation at position C-14 of ring C to form usterphenyllin A. The following furan ring formation that leads to uscandidusins A and B was proven to be an unexpected spontaneous non-enzymatic reaction. In Aspergillus ustus, this protein is NADH-dependent oxidoreductase ucdB.